The primary structure comprises 358 residues: Variant-surface-glycoprotein phospholipase C (358 aa).

Positions 25–198 (IGQVYMVGAH…STRRIFLVVR (174 aa)) constitute a PI-PLC X-box domain.

Monomer. The N-terminus is blocked.

It is found in the membrane. It carries out the reaction a 6-(alpha-D-glucosaminyl)-1-(1,2-diacyl-sn-glycero-3-phospho)-1D-myo-inositol = 6-(alpha-D-glucosaminyl)-1D-myo-inositol 1,2-cyclic phosphate + a 1,2-diacyl-sn-glycerol. By hydrolysis of the attached glycolipid, releases soluble variant surface glycoprotein containing phosphoinositol from the cell wall of T.brucei after cell lysis. It also cleaves similar membrane anchors on some mammalian proteins. VSG lipase may play a role in processes such as parasite differentiation or antigenic variation. The chain is Variant-surface-glycoprotein phospholipase C from Trypanosoma brucei brucei.